The sequence spans 308 residues: Homeobox protein HMX3 (308 aa).

Disordered regions lie at residues 1–57 (MPET…GFAL) and 107–184 (AEKS…KKKT). Pro residues predominate over residues 9 to 19 (PSAPPPPPPPK). 2 stretches are compositionally biased toward basic and acidic residues: residues 135-144 (AEQKERDPKS) and 156-177 (EEGKKEGGAEDWKKREESPEKK). Positions 181–240 (KKKTRTVFSRSQVFQLESTFDMKRYLSSSERAGLAASLHLTETQVKIWFQNRRNKWKRQL) form a DNA-binding region, homeobox.

The protein belongs to the HMX homeobox family.

It is found in the nucleus. Functionally, transcription factor involved in specification of neuronal cell types and which is required for inner ear and hypothalamus development. Binds to the 5'-CAAGTG-3' core sequence. The protein is Homeobox protein HMX3 (HMX3) of Gallus gallus (Chicken).